The primary structure comprises 151 residues: 3-dehydroquinate dehydratase 1 (151 aa).

Catalysis depends on tyrosine 24, which acts as the Proton acceptor. Residues asparagine 75, histidine 81, and aspartate 88 each contribute to the substrate site. The Proton donor role is filled by histidine 101. Substrate contacts are provided by residues 102 to 103 (IS) and arginine 112.

It belongs to the type-II 3-dehydroquinase family. Homododecamer.

It carries out the reaction 3-dehydroquinate = 3-dehydroshikimate + H2O. It functions in the pathway metabolic intermediate biosynthesis; chorismate biosynthesis; chorismate from D-erythrose 4-phosphate and phosphoenolpyruvate: step 3/7. Functionally, catalyzes a trans-dehydration via an enolate intermediate. This is 3-dehydroquinate dehydratase 1 (aroQ1) from Corynebacterium efficiens (strain DSM 44549 / YS-314 / AJ 12310 / JCM 11189 / NBRC 100395).